Consider the following 412-residue polypeptide: Autophagy-related protein 34 (412 aa).

The segment at Asn-246–Leu-348 is AMS1-binding.

In terms of assembly, interacts with AMS1, ATG8 and ATG11.

The protein localises to the preautophagosomal structure membrane. Cargo-receptor protein involved in the cytoplasm to vacuole transport (Cvt) and in autophagy. Recognizes cargo proteins, such as AMS1 and delivers them to the pre-autophagosomal structure for eventual engulfment by the autophagosome and targeting to the vacuole. The chain is Autophagy-related protein 34 (ATG34) from Saccharomyces cerevisiae (strain ATCC 204508 / S288c) (Baker's yeast).